The sequence spans 689 residues: Transketolase (689 aa).

His-56 provides a ligand contact to substrate. Thiamine diphosphate-binding positions include His-96 and 144–146 (GNL). Asp-185 serves as a coordination point for Mg(2+). Thiamine diphosphate is bound by residues Gly-186 and Asn-215. Mg(2+)-binding residues include Asn-215 and Ile-217. Substrate contacts are provided by His-289, Arg-380, and Ser-407. His-289 is a binding site for thiamine diphosphate. Glu-434 acts as the Proton donor in catalysis. Phe-460 lines the thiamine diphosphate pocket. Positions 484, 492, and 543 each coordinate substrate.

This sequence belongs to the transketolase family. In terms of assembly, homodimer. It depends on Mg(2+) as a cofactor. Ca(2+) serves as cofactor. Mn(2+) is required as a cofactor. The cofactor is Co(2+). Requires thiamine diphosphate as cofactor.

It catalyses the reaction D-sedoheptulose 7-phosphate + D-glyceraldehyde 3-phosphate = aldehydo-D-ribose 5-phosphate + D-xylulose 5-phosphate. Catalyzes the transfer of a two-carbon ketol group from a ketose donor to an aldose acceptor, via a covalent intermediate with the cofactor thiamine pyrophosphate. This is Transketolase (tkt) from Aquifex aeolicus (strain VF5).